The primary structure comprises 615 residues: Dihydroxy-acid dehydratase (615 aa).

Position 81 (Asp-81) interacts with Mg(2+). Cys-122 is a [2Fe-2S] cluster binding site. Mg(2+)-binding residues include Asp-123 and Lys-124. Lys-124 is modified (N6-carboxylysine). Cys-197 is a [2Fe-2S] cluster binding site. Position 494 (Glu-494) interacts with Mg(2+). Ser-520 (proton acceptor) is an active-site residue.

Belongs to the IlvD/Edd family. In terms of assembly, homodimer. It depends on [2Fe-2S] cluster as a cofactor. Mg(2+) serves as cofactor.

The enzyme catalyses (2R)-2,3-dihydroxy-3-methylbutanoate = 3-methyl-2-oxobutanoate + H2O. It carries out the reaction (2R,3R)-2,3-dihydroxy-3-methylpentanoate = (S)-3-methyl-2-oxopentanoate + H2O. The protein operates within amino-acid biosynthesis; L-isoleucine biosynthesis; L-isoleucine from 2-oxobutanoate: step 3/4. Its pathway is amino-acid biosynthesis; L-valine biosynthesis; L-valine from pyruvate: step 3/4. Functions in the biosynthesis of branched-chain amino acids. Catalyzes the dehydration of (2R,3R)-2,3-dihydroxy-3-methylpentanoate (2,3-dihydroxy-3-methylvalerate) into 2-oxo-3-methylpentanoate (2-oxo-3-methylvalerate) and of (2R)-2,3-dihydroxy-3-methylbutanoate (2,3-dihydroxyisovalerate) into 2-oxo-3-methylbutanoate (2-oxoisovalerate), the penultimate precursor to L-isoleucine and L-valine, respectively. The chain is Dihydroxy-acid dehydratase from Salinispora arenicola (strain CNS-205).